Reading from the N-terminus, the 87-residue chain is Large ribosomal subunit protein bL27 (87 aa).

A disordered region spans residues 1–22; it reads MAHKKGQGSVKNGRDSRSKRLG.

Belongs to the bacterial ribosomal protein bL27 family.

The chain is Large ribosomal subunit protein bL27 from Akkermansia muciniphila (strain ATCC BAA-835 / DSM 22959 / JCM 33894 / BCRC 81048 / CCUG 64013 / CIP 107961 / Muc).